A 323-amino-acid chain; its full sequence is Annexin A5 (323 aa).

Annexin repeat units lie at residues 17–88 (FNDK…ALMV), 89–160 (PAHL…SLVQ), 172–244 (GQVE…AVVK), and 248–319 (SIQG…LLCG).

It belongs to the annexin family.

Its function is as follows. Calcium/phospholipid-binding protein which promotes membrane fusion and is involved in exocytosis. The protein is Annexin A5 of Cynops pyrrhogaster (Japanese fire-bellied newt).